The sequence spans 101 residues: Small ribosomal subunit protein uS14 (101 aa).

This sequence belongs to the universal ribosomal protein uS14 family. Part of the 30S ribosomal subunit. Contacts proteins S3 and S10.

In terms of biological role, binds 16S rRNA, required for the assembly of 30S particles and may also be responsible for determining the conformation of the 16S rRNA at the A site. This chain is Small ribosomal subunit protein uS14, found in Chlamydia pneumoniae (Chlamydophila pneumoniae).